A 494-amino-acid polypeptide reads, in one-letter code: Glutamate--tRNA ligase (494 aa).

The 'HIGH' region signature appears at 9 to 19 (PSPTGPLHIGS). Residues 249–253 (KLSKR) carry the 'KMSKS' region motif. Residue K252 participates in ATP binding.

Belongs to the class-I aminoacyl-tRNA synthetase family. Glutamate--tRNA ligase type 1 subfamily. As to quaternary structure, monomer.

The protein resides in the cytoplasm. The enzyme catalyses tRNA(Glu) + L-glutamate + ATP = L-glutamyl-tRNA(Glu) + AMP + diphosphate. Its function is as follows. Catalyzes the attachment of glutamate to tRNA(Glu) in a two-step reaction: glutamate is first activated by ATP to form Glu-AMP and then transferred to the acceptor end of tRNA(Glu). The chain is Glutamate--tRNA ligase from Azobacteroides pseudotrichonymphae genomovar. CFP2.